The primary structure comprises 395 residues: GPI-anchor transamidase (395 aa).

The first 27 residues, 1-27 (MVGTWFLCRGFTTLAGLLLLPFGSLAA), serve as a signal peptide directing secretion. Over 28 to 368 (SQIEDQAEQF…PKLKDWHPPG (341 aa)) the chain is Lumenal. The Ca(2+) site is built by Asp79, Ile82, Glu118, and Asp120. His164 serves as the catalytic Proton donor. The Nucleophile; acyl-thioester intermediate role is filled by Cys206. A protein contacts are provided by Cys206, Ser232, and Ser234. The interval 231 to 236 (DSLSHQ) is autoinhibitory loop. Cysteines 275 and 280 form a disulfide. Residues 369 to 385 (GFILGLWALIIMVFFKT) traverse the membrane as a helical segment. Residues 386–395 (YGIKHMKFIF) are Cytoplasmic-facing.

It belongs to the peptidase C13 family. In terms of assembly, heteropentamer. Part of the GPI-anchor transamidase complex, consisting of PIGK, PIGT, PIGS, PIGU and GAA1. Interacts with GPAA1. Interacts with PIGT; this interaction, via a disulfide link, stabilizes the expression of GAA1 and PIGK and links them to PIGS. The disulfide bond between PIGK/GPI8 and PIGT is important for normal enzyme activity.

It is found in the endoplasmic reticulum membrane. The protein operates within glycolipid biosynthesis; glycosylphosphatidylinositol-anchor biosynthesis. In the absence of proproteins substrates, exists in an inactive state with a disrupted catalytic site by an autoinhibitory loop. The binding of proprotein substrates, particularly the CSP region, to GPI-T triggers concerted conformational changes that alleviate the inhibition by the autoinhibitory loop. Meanwhile, proprotein residues near the omega- site induce the formation of a catalytic cleft for catalysis, following which the products are released and GPI-T reverts to the inactive state. Catalytic subunit of the glycosylphosphatidylinositol-anchor (GPI-anchor) transamidase (GPI-T) complex that catalyzes the formation of the linkage between a proprotein and a GPI-anchor and participates in GPI anchored protein biosynthesis. Recognizes diverse proproteins at a C-terminal signal peptide (CSP) region that lacks consensus sequence and replaces it with a GPI-anchor via a transamidation reaction. Transamidation catalysis reaction follows a two-phase mechanism. In the acyl-enzyme phase, the carbonyl group of the proproteins's omega-site undergoes a nucleophilic attack forming an enzyme-substrate thioester bond. Followed by a general acid catalysis that allows CSP releasing, regenerating the carbonyl, and forming the acyl-enzyme intermediate. In the GPI-anchor attachment phase, the amino group of the GPI-anchor's ethanolamine phosphate, the one on third mannose (EtNP3), mediates a nucleophilic attack on the carbonyl of the acyl-enzyme intermediate, replacing the CSP, allowing GPI-anchor attachment to the omega-residue, therefore forming the product and freeing the enzyme. The protein is GPI-anchor transamidase of Sus scrofa (Pig).